Reading from the N-terminus, the 146-residue chain is Transcriptional regulator MraZ (146 aa).

SpoVT-AbrB domains lie at 5-48 (TSYH…TLEE) and 77-120 (ASEC…SRAK).

The protein belongs to the MraZ family. As to quaternary structure, forms oligomers.

The protein resides in the cytoplasm. It is found in the nucleoid. The sequence is that of Transcriptional regulator MraZ from Desulfosudis oleivorans (strain DSM 6200 / JCM 39069 / Hxd3) (Desulfococcus oleovorans).